A 273-amino-acid chain; its full sequence is Shikimate dehydrogenase (NADP(+)) (273 aa).

Shikimate-binding positions include 14 to 16 (SKS) and Thr61. The active-site Proton acceptor is the Lys65. Asn86 and Asp102 together coordinate shikimate. NADP(+) is bound by residues 126 to 130 (GAGGA), 150 to 155 (NRTHAK), and Met213. Shikimate is bound at residue Tyr215. Residue Gly237 coordinates NADP(+).

It belongs to the shikimate dehydrogenase family. Homodimer.

The catalysed reaction is shikimate + NADP(+) = 3-dehydroshikimate + NADPH + H(+). It functions in the pathway metabolic intermediate biosynthesis; chorismate biosynthesis; chorismate from D-erythrose 4-phosphate and phosphoenolpyruvate: step 4/7. In terms of biological role, involved in the biosynthesis of the chorismate, which leads to the biosynthesis of aromatic amino acids. Catalyzes the reversible NADPH linked reduction of 3-dehydroshikimate (DHSA) to yield shikimate (SA). The polypeptide is Shikimate dehydrogenase (NADP(+)) (Aeromonas salmonicida (strain A449)).